The sequence spans 729 residues: Leucine-rich repeat flightless-interacting protein 2 (729 aa).

The stretch at 27–69 (IAREAEARLAAKRAARAEARDIRMRELERQQKELTHRYHDKKW) forms a coiled coil. Disordered stretches follow at residues 80-156 (DHAR…SSSH), 230-268 (SARSSPVCSDDEGSVSYSSCRGRRDSVSSDFSDQSESAA), and 289-344 (IPDL…CSLD). Basic residues predominate over residues 84-93 (HLQRSSHRHS). Polar residues predominate over residues 99-110 (VTPNHRSSSVDV). The span at 115-126 (RGRESISRRRDS) shows a compositional bias: basic and acidic residues. Composition is skewed to low complexity over residues 137 to 147 (RTSNSYSNSYD) and 257 to 268 (SSDFSDQSESAA). Positions 304 to 320 (TTENYSRPSSRNATSGI) are enriched in polar residues. Coiled coils occupy residues 357-531 (DLKD…IGEK) and 574-722 (LDVR…KANR). Positions 600–621 (DDERQKSAKNNSTTTDPTGLEN) are disordered. The segment covering 607-616 (AKNNSTTTDP) has biased composition (polar residues).

The protein belongs to the LRRFIP family.

Functionally, may function as activator of the canonical Wnt signaling pathway upstream of ctnnb1/beta-catenin. Might be required for dorsal axis formation. In Xenopus laevis (African clawed frog), this protein is Leucine-rich repeat flightless-interacting protein 2 (lrrfip2).